The chain runs to 223 residues: MQYPINEMFQTLQGEGYFTGVPAIFIRLQGCPVGCAWCDTKHTWEKLEDREVSLFSILAKTKESDKWGAASSEDLLAVIGRQGYTARHVVITGGEPCIHDLLPLTDLLEKNGFSCQIETSGTHEVRCTPNTWVTVSPKLNMRGGYEVLSQALERANEIKHPVGRVRDIEALDELLATLTDDKPRVIALQPISQKDDATRLCIETCIARNWRLSMQTHKYLNIA.

Substrate is bound by residues 12-14 (LQG) and R27. The region spanning 18–223 (FTGVPAIFIR…MQTHKYLNIA (206 aa)) is the Radical SAM core domain. Residues C31, C35, and C38 each coordinate [4Fe-4S] cluster. T40 provides a ligand contact to Mg(2+). Substrate is bound at residue T92. Residues G94 and 136 to 138 (SPK) contribute to the S-adenosyl-L-methionine site.

Belongs to the radical SAM superfamily. 7-carboxy-7-deazaguanine synthase family. As to quaternary structure, homodimer. [4Fe-4S] cluster is required as a cofactor. S-adenosyl-L-methionine serves as cofactor. The cofactor is Mg(2+).

It catalyses the reaction 6-carboxy-5,6,7,8-tetrahydropterin + H(+) = 7-carboxy-7-deazaguanine + NH4(+). Its pathway is purine metabolism; 7-cyano-7-deazaguanine biosynthesis. Its function is as follows. Catalyzes the complex heterocyclic radical-mediated conversion of 6-carboxy-5,6,7,8-tetrahydropterin (CPH4) to 7-carboxy-7-deazaguanine (CDG), a step common to the biosynthetic pathways of all 7-deazapurine-containing compounds. This Escherichia coli (strain K12) protein is 7-carboxy-7-deazaguanine synthase.